The primary structure comprises 623 residues: DNA mismatch repair protein MutL (623 aa).

Positions A353–S368 are enriched in polar residues. Positions A353–H389 are disordered.

The protein belongs to the DNA mismatch repair MutL/HexB family.

In terms of biological role, this protein is involved in the repair of mismatches in DNA. It is required for dam-dependent methyl-directed DNA mismatch repair. May act as a 'molecular matchmaker', a protein that promotes the formation of a stable complex between two or more DNA-binding proteins in an ATP-dependent manner without itself being part of a final effector complex. The polypeptide is DNA mismatch repair protein MutL (Brucella melitensis biotype 2 (strain ATCC 23457)).